The sequence spans 261 residues: Enolase-phosphatase E1 (261 aa).

Mg(2+)-binding residues include D16 and E18. Residues 153 to 154 and K187 contribute to the substrate site; that span reads SS. D212 serves as a coordination point for Mg(2+).

Belongs to the HAD-like hydrolase superfamily. MasA/MtnC family. As to quaternary structure, monomer. Mg(2+) is required as a cofactor.

It is found in the cytoplasm. The protein resides in the nucleus. The catalysed reaction is 5-methylsulfanyl-2,3-dioxopentyl phosphate + H2O = 1,2-dihydroxy-5-(methylsulfanyl)pent-1-en-3-one + phosphate. It participates in amino-acid biosynthesis; L-methionine biosynthesis via salvage pathway; L-methionine from S-methyl-5-thio-alpha-D-ribose 1-phosphate: step 3/6. Its pathway is amino-acid biosynthesis; L-methionine biosynthesis via salvage pathway; L-methionine from S-methyl-5-thio-alpha-D-ribose 1-phosphate: step 4/6. In terms of biological role, bifunctional enzyme that catalyzes the enolization of 2,3-diketo-5-methylthiopentyl-1-phosphate (DK-MTP-1-P) into the intermediate 2-hydroxy-3-keto-5-methylthiopentenyl-1-phosphate (HK-MTPenyl-1-P), which is then dephosphorylated to form the acireductone 1,2-dihydroxy-3-keto-5-methylthiopentene (DHK-MTPene). In Salmo salar (Atlantic salmon), this protein is Enolase-phosphatase E1 (enoph1).